A 509-amino-acid chain; its full sequence is GMP synthase [glutamine-hydrolyzing] (509 aa).

The Glutamine amidotransferase type-1 domain maps to 4-193; it reads NVLILDFGSQ…LIKIAGTKAT (190 aa). The active-site Nucleophile is C79. Active-site residues include H167 and E169. In terms of domain architecture, GMPS ATP-PPase spans 194 to 384; that stretch reads WTPGKFVDLT…LGIDKELLGR (191 aa). 221–227 contributes to the ATP binding site; it reads SGGVDST.

Homodimer.

It catalyses the reaction XMP + L-glutamine + ATP + H2O = GMP + L-glutamate + AMP + diphosphate + 2 H(+). It participates in purine metabolism; GMP biosynthesis; GMP from XMP (L-Gln route): step 1/1. Catalyzes the synthesis of GMP from XMP. This Christiangramia forsetii (strain DSM 17595 / CGMCC 1.15422 / KT0803) (Gramella forsetii) protein is GMP synthase [glutamine-hydrolyzing].